Consider the following 562-residue polypeptide: NAD-dependent malic enzyme (562 aa).

The active-site Proton donor is the Y101. R154 is a binding site for NAD(+). K172 (proton acceptor) is an active-site residue. The a divalent metal cation site is built by E243, D244, and D267. NAD(+) contacts are provided by D267 and N415.

Belongs to the malic enzymes family. Homotetramer. The cofactor is Mg(2+). It depends on Mn(2+) as a cofactor.

It catalyses the reaction (S)-malate + NAD(+) = pyruvate + CO2 + NADH. The catalysed reaction is oxaloacetate + H(+) = pyruvate + CO2. The chain is NAD-dependent malic enzyme from Shewanella halifaxensis (strain HAW-EB4).